The chain runs to 845 residues: Beta-mannosidase B (845 aa).

Positions Met-1–Asp-20 are disordered. Residue Asn-252 is glycosylated (N-linked (GlcNAc...) asparagine). Glu-432 (proton donor) is an active-site residue. N-linked (GlcNAc...) asparagine glycans are attached at residues Asn-717 and Asn-723.

It belongs to the glycosyl hydrolase 2 family. Beta-mannosidase B subfamily.

The catalysed reaction is Hydrolysis of terminal, non-reducing beta-D-mannose residues in beta-D-mannosides.. It participates in glycan metabolism; N-glycan degradation. Functionally, exoglycosidase that cleaves the single beta-linked mannose residue from the non-reducing end of beta-mannosidic oligosaccharides of various complexity and length. Prefers mannobiose over mannotriose and has no activity against polymeric mannan. Is also severely restricted by galactosyl substitutions at the +1 subsite. The sequence is that of Beta-mannosidase B (mndB) from Neosartorya fischeri (strain ATCC 1020 / DSM 3700 / CBS 544.65 / FGSC A1164 / JCM 1740 / NRRL 181 / WB 181) (Aspergillus fischerianus).